A 215-amino-acid chain; its full sequence is N-(5'-phosphoribosyl)anthranilate isomerase (215 aa).

Belongs to the TrpF family.

It catalyses the reaction N-(5-phospho-beta-D-ribosyl)anthranilate = 1-(2-carboxyphenylamino)-1-deoxy-D-ribulose 5-phosphate. It participates in amino-acid biosynthesis; L-tryptophan biosynthesis; L-tryptophan from chorismate: step 3/5. In Chlorobium phaeobacteroides (strain DSM 266 / SMG 266 / 2430), this protein is N-(5'-phosphoribosyl)anthranilate isomerase.